Reading from the N-terminus, the 148-residue chain is UPF0179 protein UNCMA_27840 (148 aa).

This sequence belongs to the UPF0179 family.

This chain is UPF0179 protein UNCMA_27840, found in Methanocella arvoryzae (strain DSM 22066 / NBRC 105507 / MRE50).